A 789-amino-acid polypeptide reads, in one-letter code: Glycerol-3-phosphate acyltransferase (789 aa).

The short motif at Ser275–Ile280 is the HXXXXD motif element.

It belongs to the GPAT/DAPAT family.

The protein localises to the cell membrane. The enzyme catalyses sn-glycerol 3-phosphate + an acyl-CoA = a 1-acyl-sn-glycero-3-phosphate + CoA. The protein operates within phospholipid metabolism; CDP-diacylglycerol biosynthesis; CDP-diacylglycerol from sn-glycerol 3-phosphate: step 1/3. The polypeptide is Glycerol-3-phosphate acyltransferase (Mycobacterium bovis (strain BCG / Pasteur 1173P2)).